Consider the following 448-residue polypeptide: N-succinylarginine dihydrolase (448 aa).

Residues Gly19–Ser28, Asn110, and His137–Arg138 contribute to the substrate site. Glu174 is a catalytic residue. Position 214 (Arg214) interacts with substrate. The active site involves His250. 2 residues coordinate substrate: Asp252 and Asn365. Cys371 serves as the catalytic Nucleophile.

Belongs to the succinylarginine dihydrolase family. In terms of assembly, homodimer.

It carries out the reaction N(2)-succinyl-L-arginine + 2 H2O + 2 H(+) = N(2)-succinyl-L-ornithine + 2 NH4(+) + CO2. Its pathway is amino-acid degradation; L-arginine degradation via AST pathway; L-glutamate and succinate from L-arginine: step 2/5. In terms of biological role, catalyzes the hydrolysis of N(2)-succinylarginine into N(2)-succinylornithine, ammonia and CO(2). The chain is N-succinylarginine dihydrolase from Pseudomonas fluorescens (strain Pf0-1).